Reading from the N-terminus, the 142-residue chain is Large ribosomal subunit protein uL16 (142 aa).

Belongs to the universal ribosomal protein uL16 family. In terms of assembly, part of the 50S ribosomal subunit.

In terms of biological role, binds 23S rRNA and is also seen to make contacts with the A and possibly P site tRNAs. This chain is Large ribosomal subunit protein uL16, found in Thermotoga neapolitana (strain ATCC 49049 / DSM 4359 / NBRC 107923 / NS-E).